The primary structure comprises 408 residues: MYSYPNEQGRFGDFGGKFVPETLMQPLEEIEKAFLELKDDPSFQKDYQKLLNDYSGRPTALTFADQLTKQLGGAKIYLKREDLNHTGAHKINNALGQALLAKKMGKTKLIAETGAGQHGVAAATVAAKFGLSCIVFMGEEDVARQSLNVFRMKLLGAEVVPVSSGNGTLKDATNEAIRYWVQHCQDHFYMIGSVVGPHPYPYIVREFQRMIGEEAKAQFYQLEQSLPDKVVACVGGGSNAIGMFSAFIEETVELIGVEAAGKGVDTPLHAATITKGTKGVIHGSLTYLIQDEYGQIIEPYSISAGLDYPGVGPEHAHLHQTGRVTYESVTDDEAVSALRLLTETEGILPAIESAHALAKAFEIAKELPREKSVLVCLSGRGDKDVHTLMKVLEEEVNQDVQSEKTAVR.

Lysine 90 is modified (N6-(pyridoxal phosphate)lysine).

Belongs to the TrpB family. In terms of assembly, tetramer of two alpha and two beta chains. The cofactor is pyridoxal 5'-phosphate.

The catalysed reaction is (1S,2R)-1-C-(indol-3-yl)glycerol 3-phosphate + L-serine = D-glyceraldehyde 3-phosphate + L-tryptophan + H2O. Its pathway is amino-acid biosynthesis; L-tryptophan biosynthesis; L-tryptophan from chorismate: step 5/5. The beta subunit is responsible for the synthesis of L-tryptophan from indole and L-serine. In Bacillus licheniformis (strain ATCC 14580 / DSM 13 / JCM 2505 / CCUG 7422 / NBRC 12200 / NCIMB 9375 / NCTC 10341 / NRRL NRS-1264 / Gibson 46), this protein is Tryptophan synthase beta chain.